The chain runs to 375 residues: Elongation factor Tu (375 aa).

Residues 10 to 205 (KPHINVGAIG…TMDKYFVIPE (196 aa)) form the tr-type G domain. The interval 19–26 (GHVDHGKT) is G1. 19-26 (GHVDHGKT) contacts GTP. Threonine 26 contacts Mg(2+). A G2 region spans residues 60–64 (GITIN). Residues 81–84 (DCPG) are G3. GTP contacts are provided by residues 81-85 (DCPGH) and 136-139 (NKMD). The segment at 136 to 139 (NKMD) is G4. The interval 173 to 175 (SAF) is G5.

It belongs to the TRAFAC class translation factor GTPase superfamily. Classic translation factor GTPase family. EF-Tu/EF-1A subfamily. Monomer.

It is found in the cytoplasm. The catalysed reaction is GTP + H2O = GDP + phosphate + H(+). Functionally, GTP hydrolase that promotes the GTP-dependent binding of aminoacyl-tRNA to the A-site of ribosomes during protein biosynthesis. The sequence is that of Elongation factor Tu (tuf) from Spirochaeta aurantia.